The sequence spans 387 residues: Phosphoglycerate kinase (387 aa).

Substrate is bound by residues 21–23, R36, 59–62, R113, and R146; these read DLN and HLGR. ATP is bound by residues K197, E314, and 340-343; that span reads GGDT.

Belongs to the phosphoglycerate kinase family. As to quaternary structure, monomer.

The protein localises to the cytoplasm. The enzyme catalyses (2R)-3-phosphoglycerate + ATP = (2R)-3-phospho-glyceroyl phosphate + ADP. Its pathway is carbohydrate degradation; glycolysis; pyruvate from D-glyceraldehyde 3-phosphate: step 2/5. This Pseudomonas fluorescens (strain SBW25) protein is Phosphoglycerate kinase.